We begin with the raw amino-acid sequence, 445 residues long: Tubulin beta-1 chain (445 aa).

GTP contacts are provided by Gln-11, Glu-69, Ser-138, Gly-142, Thr-143, Gly-144, Asn-204, and Asn-226. A Mg(2+)-binding site is contributed by Glu-69. The tract at residues Gln-426 to Ala-445 is disordered. The span at Thr-429–Ala-445 shows a compositional bias: acidic residues.

This sequence belongs to the tubulin family. Dimer of alpha and beta chains. A typical microtubule is a hollow water-filled tube with an outer diameter of 25 nm and an inner diameter of 15 nM. Alpha-beta heterodimers associate head-to-tail to form protofilaments running lengthwise along the microtubule wall with the beta-tubulin subunit facing the microtubule plus end conferring a structural polarity. Microtubules usually have 13 protofilaments but different protofilament numbers can be found in some organisms and specialized cells. Requires Mg(2+) as cofactor.

The protein resides in the cytoplasm. It localises to the cytoskeleton. Tubulin is the major constituent of microtubules, a cylinder consisting of laterally associated linear protofilaments composed of alpha- and beta-tubulin heterodimers. Microtubules grow by the addition of GTP-tubulin dimers to the microtubule end, where a stabilizing cap forms. Below the cap, tubulin dimers are in GDP-bound state, owing to GTPase activity of alpha-tubulin. The polypeptide is Tubulin beta-1 chain (TUBB1) (Eleusine indica (Goosegrass)).